The chain runs to 927 residues: DNA-binding protein RFX6 (927 aa).

2 disordered regions span residues 1-21 (MAKVRELEEAFVQEQPSPQLP) and 81-108 (NFSSEEEDADTQESKTKAADPQLSQKKS). The RFX-type winged-helix DNA-binding region spans 123–198 (TLQWLEDNYI…YHYYGIGIKE (76 aa)).

This sequence belongs to the RFX family. As to quaternary structure, interacts with RFX3. In the adult pancreas, expression is restricted to the islets where it could be detected in all endocrine lineages.

The protein resides in the nucleus. In terms of biological role, transcription factor required to direct islet cell differentiation during endocrine pancreas development. Specifically required for the differentiation of 4 of the 5 islet cell types and for the production of insulin. Not required for pancreatic PP (polypeptide-producing) cells differentiation. Acts downstream of NEUROG3 and regulates the transcription factors involved in beta-cell maturation and function, thereby restricting the expression of the beta-cell differentiation and specification genes, and thus the beta-cell fate choice. Activates transcription by forming a heterodimer with RFX3 and binding to the X-box in the promoter of target genes. Involved in glucose-stimulated insulin secretion by promoting insulin and L-type calcium channel gene transcription. The sequence is that of DNA-binding protein RFX6 (Rfx6) from Mus musculus (Mouse).